Here is a 314-residue protein sequence, read N- to C-terminus: Hydroxyacyl-coenzyme A dehydrogenase, mitochondrial (314 aa).

Residues 1–12 (MAFVTRQFMRSV) constitute a mitochondrion transit peptide. NAD(+)-binding positions include 34 to 39 (GGGLMG) and D57. Residues S73 and K80 each contribute to the CoA site. N6-succinyllysine is present on K80. Residues K81 and K87 each carry the N6-acetyllysine; alternate modification. Residues K81 and K87 each carry the N6-succinyllysine; alternate modification. E122 is a binding site for NAD(+). K125 is subject to N6-acetyllysine. Residue K127 coordinates NAD(+). K127 carries the post-translational modification N6-(2-hydroxyisobutyryl)lysine. K136 carries the N6-acetyllysine; alternate modification. K136 carries the post-translational modification N6-succinyllysine; alternate. S149 and N173 together coordinate NAD(+). Residue S149 participates in CoA binding. Residue K179 is modified to N6-acetyllysine. 3 positions are modified to N6-acetyllysine; alternate: K185, K192, and K202. An N6-succinyllysine; alternate mark is found at K185, K192, and K202. The residue at position 206 (K206) is an N6-succinyllysine. K212 and K241 each carry N6-acetyllysine; alternate. 2 positions are modified to N6-succinyllysine; alternate: K212 and K241. NAD(+) is bound at residue K305. Position 312 is an N6-acetyllysine; alternate (K312). K312 is modified (N6-succinyllysine; alternate).

The protein belongs to the 3-hydroxyacyl-CoA dehydrogenase family. In terms of assembly, homodimer. Interacts with GLUD1; this interaction inhibits the activation of glutamate dehydrogenase 1 (GLUD1). Post-translationally, succinylation at Lys-81, adjacent to a coenzyme A binding site. Desuccinylated by SIRT5. In terms of tissue distribution, expressed in liver, kidney, pancreas, heart and skeletal muscle.

The protein localises to the mitochondrion matrix. The catalysed reaction is a (3S)-3-hydroxyacyl-CoA + NAD(+) = a 3-oxoacyl-CoA + NADH + H(+). The enzyme catalyses (3S)-3-hydroxybutanoyl-CoA + NAD(+) = acetoacetyl-CoA + NADH + H(+). It carries out the reaction (3S)-hydroxydecanoyl-CoA + NAD(+) = 3-oxodecanoyl-CoA + NADH + H(+). It catalyses the reaction (3S)-hydroxyhexadecanoyl-CoA + NAD(+) = 3-oxohexadecanoyl-CoA + NADH + H(+). It participates in lipid metabolism; fatty acid beta-oxidation. In terms of biological role, mitochondrial fatty acid beta-oxidation enzyme that catalyzes the third step of the beta-oxidation cycle for medium and short-chain 3-hydroxy fatty acyl-CoAs (C4 to C10). Plays a role in the control of insulin secretion by inhibiting the activation of glutamate dehydrogenase 1 (GLUD1), an enzyme that has an important role in regulating amino acid-induced insulin secretion. Plays a role in the maintenance of normal spermatogenesis through the reduction of fatty acid accumulation in the testes. The chain is Hydroxyacyl-coenzyme A dehydrogenase, mitochondrial (HADH) from Homo sapiens (Human).